Reading from the N-terminus, the 324-residue chain is D-alanine--D-alanine ligase (324 aa).

In terms of domain architecture, ATP-grasp spans 121–321 (NQYLKGFGIR…IKDVMTDIIE (201 aa)). 149–204 (INKIGLPCFIKPNAGGSSFGVTKVKTKEDIQPAIEKAFEESDEVMIEAFMKGTEIT) serves as a coordination point for ATP. Mg(2+)-binding residues include Asp275, Glu288, and Asn290.

This sequence belongs to the D-alanine--D-alanine ligase family. It depends on Mg(2+) as a cofactor. Requires Mn(2+) as cofactor.

The protein localises to the cytoplasm. The catalysed reaction is 2 D-alanine + ATP = D-alanyl-D-alanine + ADP + phosphate + H(+). It functions in the pathway cell wall biogenesis; peptidoglycan biosynthesis. Its function is as follows. Cell wall formation. The chain is D-alanine--D-alanine ligase from Phocaeicola vulgatus (strain ATCC 8482 / DSM 1447 / JCM 5826 / CCUG 4940 / NBRC 14291 / NCTC 11154) (Bacteroides vulgatus).